Consider the following 2896-residue polypeptide: MAPPGSTLLPNSPAATRGPSLARLCALVDLCLGCSRCTQRLNESTYVLRRVEHDCSREILLARFKQATKSKVWRVVGCRPTFPRPLCYQVCHYYSPGLGCRRHRNRCTFARSREEALVWTFERQHNLQRLWLKAEVQGSGAQGGAGRAADAILTEFGGRFELLCSLCFRRCPPCICRVDPQGQCPEHGACPSLLAHVSAEGRRKQQFVVVRPRPRAGQPPAYCRFVGRGQPCWRGESRCQFAHSAVEMAVWEAEQLGGLQRGDLLTPPAPDGDGRTAPLGQPPGAQLYCPACLVTCHSQEAFENHCASSEHAQMVAFDQALPWEHRSPPPGLSKFELCPKPDLCEYGDACTKAHSAQELQEWVRRTQAVELRGQAAWQDGLVPYQERLLAEYQRSSSEVLVLAETLDGVRVTCNQPLMYQAQERKTQYSWTFAVHSEEPLLHVALLKQEPGADFSLVAPGLPPGRLYARGERFRVPSSTADFQVGVRVQAASFGTFEQWVVFDFGRRPVLLQKLGLQLGQGRRPGPCRNLALGHPEEMERWHTGNRHVVPGVERTAEQTALMAKYKGPALALEFNRSSVASGPISPTNYRQRMHQFLYEEEAAQQQLVAKLTLRGQVFLKTALQTPALNMLFAPPGALYAEVPVPSSLMPDTDQGFLLGRAVSTALVAPVPAPDNTVFEVRLERRASSEQALWLLLPARCCLALGLQPEARLVLEVQFQIDPMTFRLWHQAVDTLPEEQLVVPDLPTCALPRPWSVPPLRRGNRKQELAVALIAGWGPGDGRRVPPLLIYGPFGTGKTYTLAMASLEVIRRPETKVLICTHTNSAADIYIREYFHSHVSGGHPEATPLRVMYTDRPLSQTDPVTLQYCCLTDDRQAFRPPTRAELARHRVVVTTTSQARELRVPVGFFSHILIDEAAQMLECEALTPLAYASHGTRLVLAGDHMQVTPRLFSVARARAAEHTLLHRLFLCYQQETHEVARQSRLVFHENYRCTDAIVSFISRHFYVAKGNPIHARGKVPPHPRHYPLMFCHVAGSPDRDMSMASWLNLAEIAQVVEKVQEAYNTWPSCWGGREQRCICVVSHGAQVSALRQELRRRDLGQVSVGSFEILPGRQFRVVVLSTVHTCQSLLSPGALAPEFFTDARVLNTVLTRAQSQLVVVGDAVALCSFGACGKLWESFIRECVERHSVCPEGLSMEQVEQGVAQRRRWPPRGTQAGAAGNWEAAPEPVGDLAEEQAAVVTAMVKAEPGDEALSPASRDITATTAQTEAAAAPAGDAVKEDVVPGACAAGAAAAAGVESTEAEDAEADFWPWDGELNADDAILRELLDESQKVMVTVGEDGLLDTVARPESLQQARLYENLPPAALRKLLHAEPERYRHCSFVPETFERASAIPLDDASSGPIQVRGRLDCGMAFAGDEVLVQLLSGDKAPEGRLRGRVLGVLKRKRHELAFVCRMDTWDPRIMVPINGSVTKIFVAELKDPSQVPIYSLRKGRLQRVGLERLTAEARHSRLFWVQIVLWRQGFYYPLGIVREVLPEASTWEQGLRILGLEYSLRVPPSDQATITKVLQKYHTELGRVAGRREDCRAFLTFTVDPQGACNLDDALSVRDLGPRCEVAVHITDVASFVPRDGVLDVEARRQGAAFYAPGREPVPMLPASLCQDVLSLLPGRDRLAISLFLTMEKASGQLKSLRFAPSVVQSDRQLSYEEAEEVIRQHPGAGRELPARLDSVDACVVAACYFSRLLRRHRLRSDCFYEQPDEDGTLGFRAAHIMVKEYMIQFNRLVAEFLVGSECTRTVTPLRWQPAPRSQQLKALCEKHGDRVPLSLHLGHHLHGGGGSPPDTRLHLLASLWKQVQFAARTQDYEQMVDLVTTDDMHPFLAPAGRDLRKALERSAFGRCARGHQQQGGHYSLQVDWYTWATSPIRRYLDVVLQRQILLALGHGGSAYSARDIDGLCQAFSLQHALAQSYQRRARSLHLAVQLKAQPLDKLGFVVDVEAGSRCFRLLFPSNRETLPDPCPVPYGSLQLAEHPHALAGRPGLRLLWRRRVYSAQGSSPPLPLPGTVPDPHTLAVETALWKQLLELVELQRWPEAAALIQEKGEASQRRELVQVQRSHCGHFLEVARELGSGDTLQVQLGTSLQHGFLVPSPQLWTVAPGFSLCLEHVERPGDCFSGRVYRAPRDRYRDVDEYACVWEPFCALESATGAVAENDSVTLQHLSVSWEASRTPQGQLQGAFRLEAAFLEENCADINFSCCYLCIRLEGLPAPTASPRPGPSSLGPGLNVDPGTYTWVAHGQTQDWDQERRADRQEAPRRVHLFVHHMGMEKVPEEVLRPGTLFTVELLPKQLPDLRKEEAVRGLEEASPLVTSIALGRPVPQPLCRVIPSRFLERQTYNIPGGRHKLNPSQNVAVREALEKPFTVIQGPPGTGKTIVGLHIVFWFHKSNQEQVQPGGPPRGEKRLGGPCILYCGPSNKSVDVLAGLLLRRMELKPLRVYSEQAEASEFPVPRVGSRKLLRKSPREGRPNQSLRSITLHHRIRQAPNPYSSEIKAFDTRLQRGELFSREDLVWYKKVLWEARKFELDRHEVILCTCSCAASASLKILDVRQILVDEAGMATEPETLIPLVQFPQAEKVVLLGDHKQLRPVVKNERLQNLGLDRSLFERYHEDAHMLDTQYRMHEGICAFPSVAFYKSKLKTWQGLRRPPSVLGHAGKESCPVIFGHVQGHERSLLVSTDEGNENSKANLEEVAEVVRITKQLTLGRTVEPQDIAVLTPYNAQASEISKALRREGIAGVAVSSITKSQGSEWRYVLVSTVRTCAKSDLDQRPTKSWLKKFLGFVVDPNQVNVAVTRAQEGLCLIGDHLLLRCCPLWRSLLDFCEAQQTLVPAGQVRVCRRPTMPS.

2 consecutive C3H1-type zinc fingers follow at residues 90–114 (VCHY…RSRE) and 217–246 (GQPP…HSAV). The segment at 287-311 (LYCPACLVTCHSQEAFENHCASSEH) adopts a C2H2-type; atypical zinc-finger fold. The C3H1-type 3 zinc finger occupies 327 to 357 (SPPPGLSKFELCPKPDLCEYGDACTKAHSAQ). Residues 770–1126 (VALIAGWGPG…VVLSTVHTCQ (357 aa)) form the UvrD-like helicase ATP-binding domain. 791–798 (GPFGTGKT) lines the ATP pocket. Residues 810–1306 (RRPETKVLIC…ESTEAEDAEA (497 aa)) are interaction with THRAP3. The short motif at 914-917 (DEAA) is the DEAA box element. Position 1253 is a phosphoserine (S1253). 3 consecutive short sequence motifs (LXXLL motif) follow at residues 1322–1326 (LRELL), 1365–1369 (LRKLL), and 1420–1424 (LVQLL). One can recognise an RNB domain in the interval 1581–1938 (REDCRAFLTF…VLQRQILLAL (358 aa)). The LXXLL motif 4 motif lies at 2259–2263 (LEGLP). Residues 2382–2896 (PSRFLERQTY…RVCRRPTMPS (515 aa)) are interaction with THRAP3. The UvrD-like helicase ATP-binding 2 domain maps to 2400-2675 (LNPSQNVAVR…HMLDTQYRMH (276 aa)). Residue 2421-2428 (GPPGTGKT) coordinates ATP. The LXXLL motif 5 signature appears at 2476-2480 (LAGLL).

Belongs to the DNA2/NAM7 helicase family. In terms of assembly, interacts with PPARA (via DNA-binding domain) and PPARG; the interaction stimulates the transcriptional activity of PPARA and PPARG. Interacts with THRAP3; the interaction is direct and HELZ2 and THRAP3 synergistically enhance the transcriptional activity of PPARG. It is probably part of the peroxisome proliferator activated receptor alpha interacting complex (PRIC). As to expression, expressed in various tissues including heart, pancreas, skeletal muscle, colon, spleen, liver, kidney, lung, peripheral blood and placenta.

It is found in the cytoplasm. The catalysed reaction is Exonucleolytic cleavage in the 3'- to 5'-direction to yield nucleoside 5'-phosphates.. It catalyses the reaction ATP + H2O = ADP + phosphate + H(+). In terms of biological role, can degrade highly structured RNAs through its concerted ATP-dependent RNA helicase and 3' to 5' exoribonuclease activities. Shows a strong preference for pyrimidine over purine residues for its nuclease activity. Acts as a transcriptional coactivator for a number of nuclear receptors including PPARA, PPARG, THRA, THRB and RXRA. In Homo sapiens (Human), this protein is 3'-5' exoribonuclease HELZ2.